A 310-amino-acid chain; its full sequence is Inner membrane protein YfdC (310 aa).

Residues 1 to 12 are compositionally biased toward basic and acidic residues; sequence MDNDKIDQHSDE. Residues 1–27 form a disordered region; that stretch reads MDNDKIDQHSDEIEVESEEKERGKKIE. Residues 1–58 are Cytoplasmic-facing; that stretch reads MDNDKIDQHSDEIEVESEEKERGKKIEIDEDRLPSRAMAIHEHIRQDGEKELERDAMA. Residues 59 to 81 traverse the membrane as a helical segment; sequence LLWSAIAAGLSMGASLLAKGIFQ. Over 82–90 the chain is Periplasmic; that stretch reads VELEGVPGS. A helical membrane pass occupies residues 91–113; sequence FLLENLGYTFGFIIVIMARQQLF. Topologically, residues 114 to 133 are cytoplasmic; the sequence is TENTVTAVLPVMQKPTMSNV. A helical membrane pass occupies residues 134–156; that stretch reads GLLIRLWGVVLLGNILGTGIAAW. Residues 157-186 lie on the Periplasmic side of the membrane; it reads AFEYMPIFNEETRDAFVKIGMDVMKNTPSE. A helical transmembrane segment spans residues 187–206; it reads MFANAIISGWLIATMVWMFP. Over 207 to 212 the chain is Cytoplasmic; the sequence is AAGAAK. A helical membrane pass occupies residues 213 to 232; sequence IVVIILMTWLIALGDTTHIV. Residues 233–251 are Periplasmic-facing; that stretch reads VGSVEILYLVFNGTLHWSD. The chain crosses the membrane as a helical span at residues 252-274; sequence FIWPFALPTLAGNICGGTFIFAL. Over 275–310 the chain is Cytoplasmic; it reads MSHAQIRNDMSNKRKAEARQKAERAENIKKNYKNPA. A compositionally biased stretch (basic and acidic residues) spans 291-303; sequence EARQKAERAENIK. Residues 291–310 form a disordered region; sequence EARQKAERAENIKKNYKNPA.

Its subcellular location is the cell inner membrane. The protein is Inner membrane protein YfdC (yfdC) of Escherichia coli (strain K12).